The primary structure comprises 160 residues: Eukaryotic translation initiation factor 5A (160 aa).

Residues 1-12 (MSDEEHHFESKA) show a composition bias toward basic and acidic residues. The segment at 1-21 (MSDEEHHFESKADAGASKTFP) is disordered. Hypusine is present on Lys52.

The protein belongs to the eIF-5A family. In terms of processing, lys-53 undergoes hypusination, a unique post-translational modification that consists in the addition of a butylamino group from spermidine to lysine side chain, leading to the formation of the unusual amino acid hypusine. eIF-5As are the only known proteins to undergo this modification, which is essential for their function.

Its function is as follows. Translation factor that promotes translation elongation and termination, particularly upon ribosome stalling at specific amino acid sequence contexts. Binds between the exit (E) and peptidyl (P) site of the ribosome and promotes rescue of stalled ribosome: specifically required for efficient translation of polyproline-containing peptides as well as other motifs that stall the ribosome. Acts as a ribosome quality control (RQC) cofactor by joining the RQC complex to facilitate peptidyl transfer during CAT tailing step. The protein is Eukaryotic translation initiation factor 5A of Manihot esculenta (Cassava).